We begin with the raw amino-acid sequence, 568 residues long: O-fucosyltransferase 9 (568 aa).

A compositionally biased stretch (low complexity) spans 1-19 (MHGLSRLGNGSSNGRINIP). Residues 1 to 33 (MHGLSRLGNGSSNGRINIPSPSPPSSPRIRHTR) form a disordered region. The chain crosses the membrane as a helical; Signal-anchor for type II membrane protein span at residues 65–85 (LLLAPLLYIAGMLLFMGSFGF). N-linked (GlcNAc...) asparagine glycosylation is found at N125, N151, N189, and N243. 336–338 (HLR) contacts substrate. N-linked (GlcNAc...) asparagine glycosylation is found at N408 and N409.

Belongs to the glycosyltransferase GT106 family.

Its subcellular location is the membrane. The protein operates within glycan metabolism. In Arabidopsis thaliana (Mouse-ear cress), this protein is O-fucosyltransferase 9.